A 378-amino-acid chain; its full sequence is tRNA N(3)-cytidine methyltransferase METTL2B (378 aa).

N-acetylalanine is present on Ala2. The residue at position 4 (Ser4) is a Phosphoserine. Residues Trp78 and Tyr82 each coordinate S-adenosyl-L-methionine. Thr154 carries the post-translational modification Phosphothreonine. Residues Gly188, Asp213, Asp239, Leu240, and Ile260 each contribute to the S-adenosyl-L-methionine site.

Belongs to the methyltransferase superfamily. METL family. Monomer. Interacts with DALRD3.

It is found in the cytoplasm. The catalysed reaction is cytidine(32) in tRNA(Thr) + S-adenosyl-L-methionine = N(3)-methylcytidine(32) in tRNA(Thr) + S-adenosyl-L-homocysteine + H(+). It catalyses the reaction cytidine(32) in tRNA(Arg)(CCU) + S-adenosyl-L-methionine = N(3)-methylcytidine(32) in tRNA(Arg)(CCU) + S-adenosyl-L-homocysteine + H(+). Its function is as follows. S-adenosyl-L-methionine-dependent methyltransferase that mediates N(3)-methylcytidine modification of residue 32 of the tRNA anticodon loop of tRNA(Thr)(UGU) and tRNA(Arg)(CCU). The chain is tRNA N(3)-cytidine methyltransferase METTL2B from Homo sapiens (Human).